The sequence spans 222 residues: Ribonuclease HII (222 aa).

The RNase H type-2 domain maps to 17–206; sequence DLVAGVDEVG…VRAAHEARAS (190 aa). 3 residues coordinate a divalent metal cation: Asp23, Glu24, and Asp115.

It belongs to the RNase HII family. It depends on Mn(2+) as a cofactor. Requires Mg(2+) as cofactor.

The protein localises to the cytoplasm. It carries out the reaction Endonucleolytic cleavage to 5'-phosphomonoester.. Functionally, endonuclease that specifically degrades the RNA of RNA-DNA hybrids. The chain is Ribonuclease HII from Pseudomonas savastanoi pv. phaseolicola (strain 1448A / Race 6) (Pseudomonas syringae pv. phaseolicola (strain 1448A / Race 6)).